Reading from the N-terminus, the 526-residue chain is NAD(P)H-quinone oxidoreductase chain 4 1 (526 aa).

A run of 14 helical transmembrane segments spans residues 7 to 27 (FPWL…IPLL), 35 to 55 (WYAL…FGWH), 86 to 106 (LSFP…VAAW), 114 to 134 (LFFF…LAQD), 135 to 155 (LLLF…LIAI), 168 to 188 (FILY…AMAF), 208 to 228 (ALQI…LPVF), 242 to 262 (SAPI…YGLI), 276 to 296 (FAPV…LAAL), 310 to 330 (IAHM…GLNG), 331 to 351 (ALLQ…LTGI), 374 to 396 (AFAL…GFVG), 417 to 437 (GIAL…LSML), and 463 to 483 (MAVA…PRLA).

Belongs to the complex I subunit 4 family.

It is found in the cellular thylakoid membrane. It carries out the reaction a plastoquinone + NADH + (n+1) H(+)(in) = a plastoquinol + NAD(+) + n H(+)(out). The catalysed reaction is a plastoquinone + NADPH + (n+1) H(+)(in) = a plastoquinol + NADP(+) + n H(+)(out). In terms of biological role, NDH-1 shuttles electrons from NAD(P)H, via FMN and iron-sulfur (Fe-S) centers, to quinones in the respiratory chain. The immediate electron acceptor for the enzyme in this species is believed to be plastoquinone. Couples the redox reaction to proton translocation (for every two electrons transferred, four hydrogen ions are translocated across the cytoplasmic membrane), and thus conserves the redox energy in a proton gradient. This chain is NAD(P)H-quinone oxidoreductase chain 4 1, found in Synechococcus sp. (strain JA-3-3Ab) (Cyanobacteria bacterium Yellowstone A-Prime).